The sequence spans 284 residues: HTH-type transcriptional activator RhaR (284 aa).

The 99-residue stretch at 181-279 folds into the HTH araC/xylS-type domain; sequence DMLMNALRAS…GVSPSAYRQR (99 aa). DNA-binding regions (H-T-H motif) lie at residues 198–219 and 246–269; these read EAFC…KEQT and IGDV…HQAF.

In terms of assembly, binds DNA as a dimer.

The protein localises to the cytoplasm. Its function is as follows. Activates expression of the rhaSR operon in response to L-rhamnose. This chain is HTH-type transcriptional activator RhaR, found in Pectobacterium atrosepticum (strain SCRI 1043 / ATCC BAA-672) (Erwinia carotovora subsp. atroseptica).